Consider the following 387-residue polypeptide: 8-amino-7-oxononanoate synthase (387 aa).

Substrate-binding residues include Arg-31 and Arg-38. 118 to 119 (GY) is a pyridoxal 5'-phosphate binding site. His-143 contacts substrate. Residues Ser-191, 216–219 (DDAH), and 236–239 (TLSK) contribute to the pyridoxal 5'-phosphate site. Residue Lys-239 is modified to N6-(pyridoxal phosphate)lysine. Residue Thr-348 coordinates substrate.

It belongs to the class-II pyridoxal-phosphate-dependent aminotransferase family. BioF subfamily. Homodimer. The cofactor is pyridoxal 5'-phosphate.

It catalyses the reaction 6-carboxyhexanoyl-[ACP] + L-alanine + H(+) = (8S)-8-amino-7-oxononanoate + holo-[ACP] + CO2. Its pathway is cofactor biosynthesis; biotin biosynthesis. Its function is as follows. Catalyzes the decarboxylative condensation of pimeloyl-[acyl-carrier protein] and L-alanine to produce 8-amino-7-oxononanoate (AON), [acyl-carrier protein], and carbon dioxide. This is 8-amino-7-oxononanoate synthase from Methylorubrum populi (strain ATCC BAA-705 / NCIMB 13946 / BJ001) (Methylobacterium populi).